A 521-amino-acid polypeptide reads, in one-letter code: T-box transcription factor TBX5 (521 aa).

Residues 1-45 form a disordered region; the sequence is MADTEEGFGLPSTPVDSEAKELQAEAKQDPQLGTTSKAPTSPQAA. A compositionally biased stretch (basic and acidic residues) spans 17 to 28; that stretch reads SEAKELQAEAKQ. The span at 31 to 45 shows a compositional bias: polar residues; it reads QLGTTSKAPTSPQAA. A DNA-binding region (T-box) is located at residues 63–238; it reads LWLKFHEVGT…NNPFAKGFRG (176 aa). Disordered stretches follow at residues 254–281 and 332–352; these read EYPV…TRVL and STTE…EEDP. Positions 262-281 are enriched in polar residues; that stretch reads TVRQKVSSNHSPFSGETRVL.

In terms of assembly, monomer. Homodimer (via the T-box); binds DNA as homodimer.

The protein resides in the nucleus. It localises to the cytoplasm. DNA-binding protein that regulates the transcription of several genes and is involved in heart development and limb pattern formation. May bind to the core DNA motif of promoters. This chain is T-box transcription factor TBX5 (TBX5), found in Gallus gallus (Chicken).